The primary structure comprises 643 residues: Translation factor GUF1, mitochondrial (643 aa).

Residues 1–18 (MLASQAIKRIFHRSWKPL) constitute a mitochondrion transit peptide. In terms of domain architecture, tr-type G spans 43–226 (ENYRNFSIVA…AIIDRIPPPT (184 aa)). GTP-binding positions include 52–59 (AHIDHGKS), 118–122 (DTPGH), and 172–175 (NKID).

Belongs to the TRAFAC class translation factor GTPase superfamily. Classic translation factor GTPase family. LepA subfamily.

The protein resides in the mitochondrion inner membrane. It catalyses the reaction GTP + H2O = GDP + phosphate + H(+). Its function is as follows. Promotes mitochondrial protein synthesis. May act as a fidelity factor of the translation reaction, by catalyzing a one-codon backward translocation of tRNAs on improperly translocated ribosomes. Binds to mitochondrial ribosomes in a GTP-dependent manner. This is Translation factor GUF1, mitochondrial from Zygosaccharomyces rouxii (strain ATCC 2623 / CBS 732 / NBRC 1130 / NCYC 568 / NRRL Y-229).